A 208-amino-acid chain; its full sequence is dITP/XTP pyrophosphatase (208 aa).

16–21 contacts substrate; that stretch reads SNNKGK. The active-site Proton acceptor is the Asp79. Asp79 is a Mg(2+) binding site. Residues Ser80, 166–169, Lys189, and 194–195 contribute to the substrate site; these read FGYD and HR.

The protein belongs to the HAM1 NTPase family. Homodimer. Mg(2+) is required as a cofactor.

The catalysed reaction is XTP + H2O = XMP + diphosphate + H(+). It carries out the reaction dITP + H2O = dIMP + diphosphate + H(+). The enzyme catalyses ITP + H2O = IMP + diphosphate + H(+). Functionally, pyrophosphatase that catalyzes the hydrolysis of nucleoside triphosphates to their monophosphate derivatives, with a high preference for the non-canonical purine nucleotides XTP (xanthosine triphosphate), dITP (deoxyinosine triphosphate) and ITP. Seems to function as a house-cleaning enzyme that removes non-canonical purine nucleotides from the nucleotide pool, thus preventing their incorporation into DNA/RNA and avoiding chromosomal lesions. This is dITP/XTP pyrophosphatase from Acinetobacter baumannii (strain AB307-0294).